A 71-amino-acid chain; its full sequence is Large ribosomal subunit protein uL29 (71 aa).

Belongs to the universal ribosomal protein uL29 family.

In Rickettsia africae (strain ESF-5), this protein is Large ribosomal subunit protein uL29.